The chain runs to 29 residues: Potassium channel toxin alpha-KTx 3.15 (29 aa).

A disulfide bridge connects residues cysteine 8 and cysteine 27.

It belongs to the short scorpion toxin superfamily. Potassium channel inhibitor family. Alpha-KTx 03 subfamily. Expressed by the venom gland.

It localises to the secreted. May play a role in blocking voltage-gated potassium channels Kv1.1/KCNA1, Kv1.3/KCNA3 and Kv1.6/KCNA6. The chain is Potassium channel toxin alpha-KTx 3.15 from Mesobuthus gibbosus (Mediterranean checkered scorpion).